Here is a 436-residue protein sequence, read N- to C-terminus: Trigger factor (436 aa).

In terms of domain architecture, PPIase FKBP-type spans 161 to 248 (TDRVTIDLYG…LKKVEQYRLP (88 aa)).

This sequence belongs to the FKBP-type PPIase family. Tig subfamily.

It is found in the cytoplasm. It carries out the reaction [protein]-peptidylproline (omega=180) = [protein]-peptidylproline (omega=0). Functionally, involved in protein export. Acts as a chaperone by maintaining the newly synthesized protein in an open conformation. Functions as a peptidyl-prolyl cis-trans isomerase. The chain is Trigger factor from Baumannia cicadellinicola subsp. Homalodisca coagulata.